The chain runs to 213 residues: MKAFTKITAIVAPLDRSNVDTDAIIPKQFLKSIKRSGFGPNAFDEWRYLDHGEPGMDNSKRPLNPDFSLNQPRYQGAQILLTRKNFGCGSSREHAPWALDDYGFRAVIAPSFADIFFNNCYKNGLLPIVLTEEQVDRLFKEVEANEGYQLSIDLAEQTLTTPGGETFTFDITEHRKHCLLNGLDEIGLTLQHADEIHAFEEKRRQSQPWLFNG.

Belongs to the LeuD family. LeuD type 1 subfamily. In terms of assembly, heterodimer of LeuC and LeuD.

It carries out the reaction (2R,3S)-3-isopropylmalate = (2S)-2-isopropylmalate. The protein operates within amino-acid biosynthesis; L-leucine biosynthesis; L-leucine from 3-methyl-2-oxobutanoate: step 2/4. Its function is as follows. Catalyzes the isomerization between 2-isopropylmalate and 3-isopropylmalate, via the formation of 2-isopropylmaleate. In Neisseria meningitidis serogroup C / serotype 2a (strain ATCC 700532 / DSM 15464 / FAM18), this protein is 3-isopropylmalate dehydratase small subunit.